We begin with the raw amino-acid sequence, 597 residues long: Elongation factor 4 (597 aa).

Residues 2–184 form the tr-type G domain; it reads DHIRNFSIIA…ALIAKVPPPK (183 aa). Residues 14–19 and 131–134 contribute to the GTP site; these read DHGKST and NKID.

This sequence belongs to the TRAFAC class translation factor GTPase superfamily. Classic translation factor GTPase family. LepA subfamily.

The protein resides in the cell inner membrane. It catalyses the reaction GTP + H2O = GDP + phosphate + H(+). In terms of biological role, required for accurate and efficient protein synthesis under certain stress conditions. May act as a fidelity factor of the translation reaction, by catalyzing a one-codon backward translocation of tRNAs on improperly translocated ribosomes. Back-translocation proceeds from a post-translocation (POST) complex to a pre-translocation (PRE) complex, thus giving elongation factor G a second chance to translocate the tRNAs correctly. Binds to ribosomes in a GTP-dependent manner. The sequence is that of Elongation factor 4 from Cupriavidus pinatubonensis (strain JMP 134 / LMG 1197) (Cupriavidus necator (strain JMP 134)).